Here is a 227-residue protein sequence, read N- to C-terminus: MYSISFQDDISMMPRERLMREGAEKLSNQELLSIFLRTGNKKETVFQVSQRILSSISSLNDLKYLTLQELQTISGIGPIKAVELQAIIELGRRINRAEVLQKEQIMGSQKLARKMQQELGDMRQECLVAIYLNSQNQILHQQTIFMGTVSRSIAEPREILHYALKHLATSIILVHNHPSGSVVPSRNDDEVTQHMKEACEMMGLVLLDHLIVSKSNYYSYREETDMI.

The region spanning Gln-104–Met-226 is the MPN domain. The Zn(2+) site is built by His-175, His-177, and Asp-188. A JAMM motif motif is present at residues His-175 to Asp-188.

Belongs to the UPF0758 family.

This chain is UPF0758 protein SSA_1218, found in Streptococcus sanguinis (strain SK36).